Reading from the N-terminus, the 462-residue chain is MITVVTSRLSLLPPVFSVVNSSSSRSKDMNLEPKKKVKLREDWREKSRPIPPGGTYPAKDHCSQCGLCDTYYIAHVKEACAFLGDGMSRIESLEPVVHGRGRKADSLQDTYFGVHQEQLYARKLKPVEGAQWTGIVTTIAIEMLKSNMVEAVVCVQSDPEDRLSPRPVLARTPEEVLAARGVKPTLSPNLNTLELIEASGVKRLLFCGVGCQVQALRSVEQHLNLEKLYVLGTNCVDNGTRDGLDKFLKAASKEPETVLHYEFMQDYKVQLKHLDGHIEEVPYFSLPANDLVDVIAPSCYSCFDYTNALADLVIGYMGVPKYSGLNMTDHPQYITVRNERGKEMLSLVENLLEITPTISSGDRRPFVTETVKADDAAKFGQGPAQPAPLFVGNIIAFILNLVGPKGLEFARYSLDYHTIRNYLYVNRKWGKQRANTHMPSYAKKIVEMYNKNGQIDKMLSKK.

The transit peptide at 1–20 (MITVVTSRLSLLPPVFSVVN) directs the protein to the chloroplast.

This sequence belongs to the FrhB family. In terms of assembly, interacts with SGR1, the chlorophyll catabolic enzymes (CCEs) NYC1, NOL and RCCR, and the LHCII complex. Part of a SGR1-CCE-LHCII complex, which acts in chlorophyll breakdown. Requires FAD as cofactor. It depends on iron-sulfur cluster as a cofactor.

It is found in the plastid. The protein resides in the chloroplast. It carries out the reaction chlorophyll a + 2 oxidized [2Fe-2S]-[ferredoxin] + H2O = 7(1)-hydroxychlorophyll a + 2 reduced [2Fe-2S]-[ferredoxin] + 2 H(+). In terms of biological role, probable iron-sulfur flavoprotein that converts 7-hydroxymethyl chlorophyll a to chlorophyll a using ferredoxin as a reducing equivalent. Catalyzes the reduction of a hydroxymethyl group to a methyl group. Belongs to the chlorophyll catabolic enzymes (CCEs). In Arabidopsis thaliana (Mouse-ear cress), this protein is 7-hydroxymethyl chlorophyll a reductase, chloroplastic (HCAR).